Reading from the N-terminus, the 369-residue chain is p21-activated protein kinase-interacting protein 1-like (369 aa).

WD repeat units follow at residues 33-70 (AHTASLSAVAVNSKYVVTGSRDESIQIYDMRKKVEHGA), 73-111 (QHNGTITCLEFYGTAHLLSGAEDGLICIWNTKRWECLKS), 114-153 (AHKGHVTSLSIHPSGKLALSVGTDKTLRTWNLVEGRSAFI), 195-233 (TIEKRISSIRFITDSVLAIAGDDEIIRFYSCDSQKCLCE), and 236-278 (AREN…NNVP). Positions 311–369 (ATSTEANESEKPSAVKKKKVCGMNKSGKLTKQRRRIVPAKRKLEAPLQKKKKKKQNSSE) are disordered. Basic residues-rich tracts occupy residues 338–350 (KLTKQRRRIVPAK) and 358–369 (QKKKKKKQNSSE).

The protein resides in the nucleus. Its subcellular location is the nucleolus. Functionally, negatively regulates the PAK1 kinase. PAK1 is a member of the PAK kinase family, which has been shown to play a positive role in the regulation of signaling pathways involving MAPK8 and RELA. PAK1 exists as an inactive homodimer, which is activated by binding of small GTPases such as CDC42 to an N-terminal regulatory domain. PAK1IP1 also binds to the N-terminus of PAK1, and inhibits the specific activation of PAK1 by CDC42. May be involved in ribosomal large subunit assembly. The chain is p21-activated protein kinase-interacting protein 1-like (PAK1IP1) from Gallus gallus (Chicken).